The chain runs to 524 residues: Phosphoenolpyruvate carboxykinase (ATP) (524 aa).

Substrate contacts are provided by Arg52, Tyr188, and Lys194. ATP is bound by residues Lys194, His213, and 229–237 (GLSGTGKTT). Mn(2+) is bound by residues Lys194 and His213. Mn(2+) is bound at residue Asp250. ATP-binding residues include Glu278, Arg314, and Thr439. Arg314 contacts substrate.

This sequence belongs to the phosphoenolpyruvate carboxykinase (ATP) family. Requires Mn(2+) as cofactor.

It is found in the cytoplasm. The catalysed reaction is oxaloacetate + ATP = phosphoenolpyruvate + ADP + CO2. It participates in carbohydrate biosynthesis; gluconeogenesis. Its function is as follows. Involved in the gluconeogenesis. Catalyzes the conversion of oxaloacetate (OAA) to phosphoenolpyruvate (PEP) through direct phosphoryl transfer between the nucleoside triphosphate and OAA. This Campylobacter jejuni subsp. jejuni serotype O:2 (strain ATCC 700819 / NCTC 11168) protein is Phosphoenolpyruvate carboxykinase (ATP).